The chain runs to 1013 residues: Putative helicase mov-10-B.1 (1013 aa).

Polar residues-rich tracts occupy residues 91-103 (QWSRPYRSQQNHA) and 113-123 (RPSTTRVSDPS). The segment at 91 to 129 (QWSRPYRSQQNHATPHLNDAISRPSTTRVSDPSSVPEPE) is disordered. 550-557 (GPPGTGKT) is a binding site for ATP. Residues 672–675 (DEAG) carry the DEAG box motif.

It belongs to the DNA2/NAM7 helicase family. SDE3 subfamily.

It is found in the cytoplasm. The protein resides in the P-body. The enzyme catalyses ATP + H2O = ADP + phosphate + H(+). Probable RNA helicase. Required for RNA-mediated gene silencing by the RNA-induced silencing complex (RISC). Required for both miRNA-mediated translational repression and miRNA-mediated cleavage of complementary mRNAs by RISC. This is Putative helicase mov-10-B.1 (mov10b.1) from Danio rerio (Zebrafish).